The chain runs to 446 residues: Histidine--tRNA ligase (446 aa).

The protein belongs to the class-II aminoacyl-tRNA synthetase family. Homodimer.

The protein resides in the cytoplasm. It catalyses the reaction tRNA(His) + L-histidine + ATP = L-histidyl-tRNA(His) + AMP + diphosphate + H(+). This is Histidine--tRNA ligase from Burkholderia pseudomallei (strain 1710b).